Consider the following 312-residue polypeptide: Ribose-phosphate pyrophosphokinase (312 aa).

Residues 34–36 and 93–94 contribute to the ATP site; these read DLE and RQ. Residues His127 and Asp168 each contribute to the Mg(2+) site. The active site involves Lys192. Residues Arg194, Asp218, and 222–226 contribute to the D-ribose 5-phosphate site; that span reads DSAGT.

Belongs to the ribose-phosphate pyrophosphokinase family. Class I subfamily. As to quaternary structure, homohexamer. Mg(2+) serves as cofactor.

The protein localises to the cytoplasm. The enzyme catalyses D-ribose 5-phosphate + ATP = 5-phospho-alpha-D-ribose 1-diphosphate + AMP + H(+). It functions in the pathway metabolic intermediate biosynthesis; 5-phospho-alpha-D-ribose 1-diphosphate biosynthesis; 5-phospho-alpha-D-ribose 1-diphosphate from D-ribose 5-phosphate (route I): step 1/1. Involved in the biosynthesis of the central metabolite phospho-alpha-D-ribosyl-1-pyrophosphate (PRPP) via the transfer of pyrophosphoryl group from ATP to 1-hydroxyl of ribose-5-phosphate (Rib-5-P). This Caulobacter vibrioides (strain ATCC 19089 / CIP 103742 / CB 15) (Caulobacter crescentus) protein is Ribose-phosphate pyrophosphokinase.